The sequence spans 405 residues: Cytoplasmic tRNA 2-thiolation protein 2 (405 aa).

Belongs to the CTU2/NCS2 family.

The protein localises to the cytoplasm. The protein operates within tRNA modification; 5-methoxycarbonylmethyl-2-thiouridine-tRNA biosynthesis. Its function is as follows. Plays a central role in 2-thiolation of mcm(5)S(2)U at tRNA wobble positions of tRNA(Lys), tRNA(Glu) and tRNA(Gln). May act by forming a heterodimer with NCS6/CTU1 that ligates sulfur from thiocarboxylated URM1 onto the uridine of tRNAs at wobble position. The polypeptide is Cytoplasmic tRNA 2-thiolation protein 2 (Drosophila simulans (Fruit fly)).